Reading from the N-terminus, the 76-residue chain is MDEKAKAMLMLGVLNDAFGDIRNMIYYLQDFIYSHPDWAEDFEKLGLNDVLNAARELEKLTLEKMDLLKRIAEGKE.

This is an uncharacterized protein from Archaeoglobus fulgidus (strain ATCC 49558 / DSM 4304 / JCM 9628 / NBRC 100126 / VC-16).